A 267-amino-acid polypeptide reads, in one-letter code: Apolipoprotein A-I (267 aa).

Residues 1-18 (MKAAVLTLAVLFLTGSQA) form the signal peptide. 2 repeat units span residues 68–89 (LKLL…EDLG) and 90–111 (PVTQ…QEMS). Residues 68–267 (LKLLDNWDSL…EEYAKKLSSQ (200 aa)) are 10 X approximate tandem repeats. The residue at position 110 (methionine 110) is a Methionine sulfoxide. The 3; half-length repeat unit spans residues 112 to 122 (KDLEEVKAKVQ). A run of 5 repeats spans residues 123 to 144 (PYLD…QKLE), 145 to 166 (PLRT…EKLS), 167 to 188 (PLAE…TQLA), 189 to 210 (PYSD…ESGG), and 211 to 232 (ASLA…EKAK). The stretch at 233 to 243 (PALEDLRQGLL) is one 9; half-length repeat. Repeat unit 10 spans residues 244–267 (PVLESFKVSFLSALEEYAKKLSSQ).

This sequence belongs to the apolipoprotein A1/A4/E family. Homodimer. Interacts with APOA1BP and CLU. Component of a sperm activating protein complex (SPAP), consisting of APOA1, an immunoglobulin heavy chain, an immunoglobulin light chain and albumin. Interacts with NDRG1. Interacts with SCGB3A2. Interacts with NAXE and YJEFN3. Glycosylated. Post-translationally, palmitoylated. In terms of processing, phosphorylation sites are present in the extracellular medium.

The protein localises to the secreted. Functionally, participates in the reverse transport of cholesterol from tissues to the liver for excretion by promoting cholesterol efflux from tissues and by acting as a cofactor for the lecithin cholesterol acyltransferase (LCAT). As part of the SPAP complex, activates spermatozoa motility. The polypeptide is Apolipoprotein A-I (APOA1) (Cebus imitator (Panamanian white-faced capuchin)).